A 330-amino-acid chain; its full sequence is N-acetyl-gamma-glutamyl-phosphate reductase (330 aa).

Residue cysteine 155 is part of the active site.

The protein belongs to the NAGSA dehydrogenase family. Type 1 subfamily.

Its subcellular location is the cytoplasm. The enzyme catalyses N-acetyl-L-glutamate 5-semialdehyde + phosphate + NADP(+) = N-acetyl-L-glutamyl 5-phosphate + NADPH + H(+). It functions in the pathway amino-acid biosynthesis; L-arginine biosynthesis; N(2)-acetyl-L-ornithine from L-glutamate: step 3/4. Functionally, catalyzes the NADPH-dependent reduction of N-acetyl-5-glutamyl phosphate to yield N-acetyl-L-glutamate 5-semialdehyde. The protein is N-acetyl-gamma-glutamyl-phosphate reductase of Shewanella halifaxensis (strain HAW-EB4).